A 123-amino-acid chain; its full sequence is Large ribosomal subunit protein bL12 (123 aa).

This sequence belongs to the bacterial ribosomal protein bL12 family. As to quaternary structure, homodimer. Part of the ribosomal stalk of the 50S ribosomal subunit. Forms a multimeric L10(L12)X complex, where L10 forms an elongated spine to which 2 to 4 L12 dimers bind in a sequential fashion. Binds GTP-bound translation factors.

Its function is as follows. Forms part of the ribosomal stalk which helps the ribosome interact with GTP-bound translation factors. Is thus essential for accurate translation. The polypeptide is Large ribosomal subunit protein bL12 (Zymomonas mobilis subsp. mobilis (strain ATCC 31821 / ZM4 / CP4)).